A 720-amino-acid polypeptide reads, in one-letter code: Transcriptional regulator EFH1 (720 aa).

Composition is skewed to polar residues over residues 1–15 and 22–35; these read MNGIMTTSSHSNFYN and PSSSDHIPGPSSQD. Disordered stretches follow at residues 1–111, 181–223, 245–336, and 365–437; these read MNGI…SSST, SFQM…HQSQ, QKEF…TIAT, and YQRQ…PQPD. Positions 71–105 are enriched in low complexity; that stretch reads QQNQSESQQSRQSHHLQQQQQQQQQQQQNQHNQQN. The span at 181–200 shows a compositional bias: polar residues; it reads SFQMGSVSTPDTQNSSIRSK. Residues 201–223 show a composition bias toward low complexity; sequence QQQQHSYQQQQPQQLSQSQHQSQ. Polar residues predominate over residues 254-266; sequence GDQTLVPQTNSKL. The segment covering 267-304 has biased composition (low complexity); the sequence is QQQISETSYSQQQQQQQSPPTPQKQQQQQHYQHQTTQP. Residues 313 to 336 are compositionally biased toward polar residues; it reads YSQTGGPSSSPVAGNISIPTTIAT. A compositionally biased stretch (low complexity) spans 366 to 399; the sequence is QRQQQQQQQHQQPQSQQMSQISQLSQQIPPQGSS. Positions 400–413 are enriched in polar residues; that stretch reads KNISINSTPTKSRA. Residues 414–433 show a composition bias toward low complexity; sequence SSITTRSGRQSRSTSISSFI. The HTH APSES-type domain occupies 446-552; that stretch reads KVATTRWDDE…KNIKQYFLTK (107 aa). The H-T-H motif DNA-binding region spans 480 to 501; that stretch reads GTKLLNVIGMTRGKRDGILKTE. The segment covering 569–582 has biased composition (basic and acidic residues); it reads GMTRQREEVRREGR. The tract at residues 569-662 is disordered; that stretch reads GMTRQREEVR…KNSESKLLET (94 aa). The segment covering 613-644 has biased composition (acidic residues); the sequence is VPGDDEEEEDDDDDDDDDEEEGEQDDEEEEDG. The span at 645–654 shows a compositional bias: low complexity; it reads SSTSMSSSKN.

This sequence belongs to the EFG1/PHD1/stuA family.

The protein localises to the nucleus. Functionally, transcription factor that regulates filamentous growth through repression of EFG1. Regulates the level of colonizing fungi, favoring commensalism as opposed to candidiasis. This Candida albicans (strain SC5314 / ATCC MYA-2876) (Yeast) protein is Transcriptional regulator EFH1 (EFH1).